The following is a 308-amino-acid chain: METSEHIPVLLAEAVAALEIAPNGRYLDATFGRGGHSSEILAQLGESGQLYALDRDQQAAAVAAQITDPRFHFARCAFSEMETAFAALGAESLDGILFDLGVSSPQLDDPSRGFSFAKEGPLDMRMDNEQNLTAQKWLKNVDEDTLTTVIRDYGGEPHTVAKRIAKAILAAKNDLKSTLDLASVVAQARPKKLYKPHLHPATQTFQAIRIAVNDEIGEIQRALRAATMMLKSGGILVVISFHGLEDATVKRFVRSMEGEPLPAEIPATNTTNIHQVLRLVPPVIKPSSAEIAQNPRSRSAKLRKAVKL.

S-adenosyl-L-methionine is bound by residues 34–36 (GGH), Asp-54, Phe-85, Asp-99, and Gln-106.

It belongs to the methyltransferase superfamily. RsmH family.

The protein localises to the cytoplasm. The catalysed reaction is cytidine(1402) in 16S rRNA + S-adenosyl-L-methionine = N(4)-methylcytidine(1402) in 16S rRNA + S-adenosyl-L-homocysteine + H(+). In terms of biological role, specifically methylates the N4 position of cytidine in position 1402 (C1402) of 16S rRNA. This chain is Ribosomal RNA small subunit methyltransferase H, found in Dichelobacter nodosus (strain VCS1703A).